Here is an 84-residue protein sequence, read N- to C-terminus: Neurotoxin BM10-1-like (84 aa).

An N-terminal signal peptide occupies residues 1–21 (MKTLLLTLVVVTIVCLDLGYT). 5 cysteine pairs are disulfide-bonded: Cys-24/Cys-47, Cys-27/Cys-32, Cys-40/Cys-64, Cys-68/Cys-76, and Cys-77/Cys-82.

This sequence belongs to the three-finger toxin family. Ancestral subfamily. Orphan group IV sub-subfamily. In terms of tissue distribution, expressed by the venom gland.

The protein resides in the secreted. In terms of biological role, binds and inhibits muscular and neuronal nicotinic acetylcholine receptors (nAChR). This is Neurotoxin BM10-1-like from Bungarus multicinctus (Many-banded krait).